A 319-amino-acid polypeptide reads, in one-letter code: Ribosomal RNA small subunit methyltransferase H (319 aa).

Residues 34–36 (GGH), D54, F83, D104, and Q111 each bind S-adenosyl-L-methionine.

It belongs to the methyltransferase superfamily. RsmH family.

Its subcellular location is the cytoplasm. The enzyme catalyses cytidine(1402) in 16S rRNA + S-adenosyl-L-methionine = N(4)-methylcytidine(1402) in 16S rRNA + S-adenosyl-L-homocysteine + H(+). Functionally, specifically methylates the N4 position of cytidine in position 1402 (C1402) of 16S rRNA. This is Ribosomal RNA small subunit methyltransferase H from Lactiplantibacillus plantarum (strain ATCC BAA-793 / NCIMB 8826 / WCFS1) (Lactobacillus plantarum).